A 178-amino-acid chain; its full sequence is Large ribosomal subunit protein uL6 (178 aa).

It belongs to the universal ribosomal protein uL6 family. In terms of assembly, part of the 50S ribosomal subunit.

Its function is as follows. This protein binds to the 23S rRNA, and is important in its secondary structure. It is located near the subunit interface in the base of the L7/L12 stalk, and near the tRNA binding site of the peptidyltransferase center. The protein is Large ribosomal subunit protein uL6 of Symbiobacterium thermophilum (strain DSM 24528 / JCM 14929 / IAM 14863 / T).